The primary structure comprises 150 residues: Regulatory protein RecX (150 aa).

It belongs to the RecX family.

It localises to the cytoplasm. In terms of biological role, modulates RecA activity. The polypeptide is Regulatory protein RecX (Ectopseudomonas mendocina (strain ymp) (Pseudomonas mendocina)).